The sequence spans 807 residues: Putative AC transposase (807 aa).

Disordered stretches follow at residues 42-140 and 785-807; these read GLKR…KKCT and MDED…GSSP. Positions 84-98 are enriched in polar residues; sequence QSVSSSNANGTATDP. A run of 10 repeats spans residues 109–110, 111–112, 113–114, 115–116, 117–118, 119–120, 121–122, 123–124, 125–126, and 127–128. A 10 X 2 AA tandem repeats of P-[QE] region spans residues 109–128; sequence PQPQPQPQPEPQPQPQPEPE. The span at 110–125 shows a compositional bias: pro residues; that stretch reads QPQPQPQPEPQPQPQP.

This is Putative AC transposase from Zea mays (Maize).